The sequence spans 236 residues: (5-formylfuran-3-yl)methyl phosphate synthase (236 aa).

K27 acts as the Schiff-base intermediate with substrate in catalysis. The active-site Proton acceptor is K85.

The protein belongs to the MfnB family.

It catalyses the reaction 2 D-glyceraldehyde 3-phosphate = 4-(hydroxymethyl)-2-furancarboxaldehyde phosphate + phosphate + 2 H2O. The protein operates within cofactor biosynthesis; methanofuran biosynthesis. In terms of biological role, catalyzes the formation of 4-(hydroxymethyl)-2-furancarboxaldehyde phosphate (4-HFC-P) from two molecules of glyceraldehyde-3-P (GA-3-P). This chain is (5-formylfuran-3-yl)methyl phosphate synthase, found in Methanococcus maripaludis (strain C7 / ATCC BAA-1331).